The chain runs to 393 residues: Nuclear speckle splicing regulatory protein 1 homolog (393 aa).

Positions 1 to 49 are disordered; that stretch reads MSAPPKRFGLIVKQKEEPKRAPVRVSSVFGDDDDDEAPATATNTSSASV. The span at 39–48 shows a compositional bias: low complexity; sequence ATATNTSSAS. Positions 76-166 form a coiled coil; the sequence is NYDEIQAIKN…YREQEAEEAA (91 aa). The disordered stretch occupies residues 187-350; that stretch reads LLNDLARDPT…SLKDKLKPKR (164 aa). Basic residues predominate over residues 199-209; sequence KQRKMEKKNVR. 4 stretches are compositionally biased toward basic and acidic residues: residues 222–236, 243–261, 317–333, and 341–350; these read EDVKKKEEPKKKSIY, DEKKSKAPEAPKKNFEGEL, DHAQRNQREKTKSKSPE, and SLKDKLKPKR.

Belongs to the NSRP1 family.

The sequence is that of Nuclear speckle splicing regulatory protein 1 homolog from Caenorhabditis briggsae.